A 349-amino-acid polypeptide reads, in one-letter code: DNA polymerase IV (349 aa).

Positions 7-188 (IIHIDMDYFF…LPVKKLFGVG (182 aa)) constitute a UmuC domain. Mg(2+) contacts are provided by aspartate 11 and aspartate 106. Residue glutamate 107 is part of the active site.

This sequence belongs to the DNA polymerase type-Y family. Monomer. Mg(2+) is required as a cofactor.

It is found in the cytoplasm. The enzyme catalyses DNA(n) + a 2'-deoxyribonucleoside 5'-triphosphate = DNA(n+1) + diphosphate. Poorly processive, error-prone DNA polymerase involved in untargeted mutagenesis. Copies undamaged DNA at stalled replication forks, which arise in vivo from mismatched or misaligned primer ends. These misaligned primers can be extended by PolIV. Exhibits no 3'-5' exonuclease (proofreading) activity. May be involved in translesional synthesis, in conjunction with the beta clamp from PolIII. The sequence is that of DNA polymerase IV from Francisella tularensis subsp. novicida (strain U112).